Here is a 154-residue protein sequence, read N- to C-terminus: MIHFILLFSRQGKLRLQKWYTTLPDKERKKITRDIIQTVLSRGHRTSSFIDWKELKLVYKRYASLYFCCAIENQDNELLTLEIVHRYVELLDKYFGNVCELDIIFNFEKAYFILDEFIIGGEIQETSKKTAVKAIEDSDMLQETMEEYMNKPTF.

It belongs to the adaptor complexes small subunit family. In terms of assembly, adaptor protein complex 1 (AP-1) is a heterotetramer composed of two large adaptins (gamma-type subunit AP1G1 and beta-type subunit AP1B1), a medium adaptin (mu-type subunit AP1M1 or AP1M2) and a small adaptin (sigma-type subunit AP1S1 or AP1S2 or AP1S3).

The protein resides in the golgi apparatus. It is found in the cytoplasmic vesicle membrane. It localises to the membrane. The protein localises to the clathrin-coated pit. Functionally, subunit of clathrin-associated adaptor protein complex 1 that plays a role in protein sorting in the late-Golgi/trans-Golgi network (TGN) and/or endosomes. The AP complexes mediate both the recruitment of clathrin to membranes and the recognition of sorting signals within the cytosolic tails of transmembrane cargo molecules. Involved in TLR3 trafficking. In Mus musculus (Mouse), this protein is AP-1 complex subunit sigma-3 (Ap1s3).